The sequence spans 325 residues: Malate dehydrogenase (325 aa).

11 to 17 contacts NAD(+); sequence GAAGQIA. Residues R92 and R98 each contribute to the substrate site. NAD(+)-binding positions include N105, Q112, and 129–131; that span reads VGN. Positions 131 and 162 each coordinate substrate. The active-site Proton acceptor is H187.

This sequence belongs to the LDH/MDH superfamily. MDH type 2 family.

The enzyme catalyses (S)-malate + NAD(+) = oxaloacetate + NADH + H(+). Functionally, catalyzes the reversible oxidation of malate to oxaloacetate. The sequence is that of Malate dehydrogenase from Methylococcus capsulatus (strain ATCC 33009 / NCIMB 11132 / Bath).